Consider the following 209-residue polypeptide: 3-demethoxyubiquinol 3-hydroxylase (209 aa).

Residues Glu-58, Glu-88, His-91, Glu-140, Glu-172, and His-175 each contribute to the Fe cation site.

This sequence belongs to the COQ7 family. Requires Fe cation as cofactor.

It is found in the cell membrane. It carries out the reaction a 5-methoxy-2-methyl-3-(all-trans-polyprenyl)benzene-1,4-diol + AH2 + O2 = a 3-demethylubiquinol + A + H2O. Its pathway is cofactor biosynthesis; ubiquinone biosynthesis. In terms of biological role, catalyzes the hydroxylation of 2-nonaprenyl-3-methyl-6-methoxy-1,4-benzoquinol during ubiquinone biosynthesis. The sequence is that of 3-demethoxyubiquinol 3-hydroxylase from Polynucleobacter necessarius subsp. necessarius (strain STIR1).